A 257-amino-acid chain; its full sequence is Zinc transporter ZupT (257 aa).

A run of 8 helical transmembrane segments spans residues 5–25 (LILTLLAGAATFIGAFLGVLG), 32–52 (VLAFSLGFAAGIMLLISLMEM), 61–81 (GMSPVLGYGMFIIGLLGYFGL), 109–129 (AILLTLGISLHNFPEGIATFV), 137–157 (LGFGIALAVALHNIPEGLAVA), 171–191 (IFWAGISGMAEILGGVLAWLI), 195–215 (LVSPIVMAAIMAAVAGIMVAL), and 236–256 (GVLCGMSIMGLSLVILQTIGI). Fe(2+) is bound by residues N120 and E123. Zn(2+) is bound by residues E123 and H148. Positions 149, 152, and 181 each coordinate Fe(2+). Residue E152 coordinates Zn(2+).

The protein belongs to the ZIP transporter (TC 2.A.5) family. ZupT subfamily.

Its subcellular location is the cell inner membrane. It carries out the reaction Zn(2+)(in) = Zn(2+)(out). In terms of biological role, mediates zinc uptake. May also transport other divalent cations. The sequence is that of Zinc transporter ZupT from Salmonella heidelberg (strain SL476).